The sequence spans 580 residues: MRLSRYYIPTLKEDPSEAEVVSHKLLMRAGMIRKLTSGIYNYLPLGLKSVNKVAAIVREEMNRAGALEVLMPMVQPGDLWQETGRWDYYGKELLRVKDRHGRDYCLGPTHEEVITDLVRGEVKSYKQLPLNLYQIQTKFRDEIRPRFGLMRGREFIMKDAYSFDKDEAGAEESYRGMFEAYKKAFSRIGLNFRPVQADSGAIGGDFSHEFHVLADTGEDTIAVCKDEKCGYAANLEKAKVAAPTGESMLNAECPAIEEVATPGKHTVEEVCEFLGVEQDKLVKTLLFTVDGEPVAALVRGDRELNDVKLRNLVGGNEIEMASEEQVKEWTGAPVGFAGPVGLKIERIFADHELLTETDWIAGANKGDTHIKHLSLGRDCKIEQFADLRVITEADPCPECGAAIEFTKGIEVGHVFKLGSKYSKSMEATFLDENGKTQPMVMGCYGIGVSRIVASAIEQNNDENGAIFPPTIAPFELCVISLGGKDEAVNEKAEEFYNELMEMGIDAAYDDRKERPGVKFADADLIGYPMQLVIGGKGLKNGIVEAKNRKTGEKIELPLEGFTEAFKAWRAEIWQSWGLKA.

This sequence belongs to the class-II aminoacyl-tRNA synthetase family. ProS type 1 subfamily. In terms of assembly, homodimer.

Its subcellular location is the cytoplasm. It catalyses the reaction tRNA(Pro) + L-proline + ATP = L-prolyl-tRNA(Pro) + AMP + diphosphate. Catalyzes the attachment of proline to tRNA(Pro) in a two-step reaction: proline is first activated by ATP to form Pro-AMP and then transferred to the acceptor end of tRNA(Pro). As ProRS can inadvertently accommodate and process non-cognate amino acids such as alanine and cysteine, to avoid such errors it has two additional distinct editing activities against alanine. One activity is designated as 'pretransfer' editing and involves the tRNA(Pro)-independent hydrolysis of activated Ala-AMP. The other activity is designated 'posttransfer' editing and involves deacylation of mischarged Ala-tRNA(Pro). The misacylated Cys-tRNA(Pro) is not edited by ProRS. The sequence is that of Proline--tRNA ligase from Maridesulfovibrio salexigens (strain ATCC 14822 / DSM 2638 / NCIMB 8403 / VKM B-1763) (Desulfovibrio salexigens).